Reading from the N-terminus, the 176-residue chain is SDCQVSNIQVMQNFDRSRYTGRWYAVAKKDPVGLFLLDNVVAQFSVDESGKVTATAHGRVIILNNWEMCANMFGTFEDTPDPAKFKMRYWGAASYLQTGNDDHWVIDTDYDNYAIHYSCREVDLDGTCLDGYSFIFSRHPTGLRPEDQKIVTDKKKEICFLGKYRRVGHTGFCESS.

S1 bears the N-acetylserine mark. 3 cysteine pairs are disulfide-bonded: C3–C159, C69–C173, and C119–C128. Substrate is bound at residue Q97.

It belongs to the calycin superfamily. Lipocalin family.

The protein localises to the secreted. Functionally, RBP delivers retinol from the liver stores to the peripheral tissues. In plasma, the RBP-retinol complex interacts with transthyretin, this prevents its loss by filtration through the kidney glomeruli. In Oncorhynchus mykiss (Rainbow trout), this protein is Retinol-binding protein 4-A (rbp4a).